We begin with the raw amino-acid sequence, 444 residues long: Phosphoglucosamine mutase (444 aa).

The active-site Phosphoserine intermediate is serine 103. Residues serine 103, aspartate 241, aspartate 243, and aspartate 245 each coordinate Mg(2+). Serine 103 is modified (phosphoserine).

Belongs to the phosphohexose mutase family. Mg(2+) is required as a cofactor. In terms of processing, activated by phosphorylation.

It catalyses the reaction alpha-D-glucosamine 1-phosphate = D-glucosamine 6-phosphate. Catalyzes the conversion of glucosamine-6-phosphate to glucosamine-1-phosphate. In Deinococcus geothermalis (strain DSM 11300 / CIP 105573 / AG-3a), this protein is Phosphoglucosamine mutase.